Consider the following 380-residue polypeptide: Glucose ABC transporter permease protein TsgB13 (380 aa).

10 helical membrane-spanning segments follow: residues 20–40, 59–81, 94–114, 115–135, 148–166, 202–222, 255–275, 282–301, 305–325, and 328–348; these read GTPV…LVAL, QFGL…AVYL, GQLL…SLPA, VALL…WAGI, IITS…SYLL, IPLF…VVAT, VYLF…IAEI, FRAA…ALLG, AVKV…GSSV, and AFGV…LFLI.

It belongs to the binding-protein-dependent transport system permease family. The complex is composed of two ATP-binding proteins (TsgD13), two transmembrane proteins (TsgB13 and TsgC13) and a solute-binding protein (TsgA13).

It is found in the cell membrane. In terms of biological role, part of an ABC transporter complex involved in glucose import. Responsible for the translocation of the substrate across the membrane. This is Glucose ABC transporter permease protein TsgB13 (tsgB13) from Haloferax volcanii (strain ATCC 29605 / DSM 3757 / JCM 8879 / NBRC 14742 / NCIMB 2012 / VKM B-1768 / DS2) (Halobacterium volcanii).